A 219-amino-acid polypeptide reads, in one-letter code: GTP-binding nuclear protein GSP1/CNR1 (219 aa).

Ser-2 bears the N-acetylserine mark. The residue at position 2 (Ser-2) is a Phosphoserine. Residues 9–173 (EVPTFKLVLV…LWLARKLAGN (165 aa)) form the Small GTPase Ran-type domain. 20–27 (DGGTGKTT) serves as a coordination point for GTP. Residues 39-47 (KKYIATIGV) are switch-I. GTP is bound by residues Gly-70, 124-127 (NKVD), and 152-154 (SAK). A switch-II region spans residues 70–86 (GQEKFGGLRDGYYINAQ).

Belongs to the small GTPase superfamily. Ran family. In terms of assembly, found in a nuclear export complex with RanGTP, exportin and pre-miRNA. Forms a complex with YRB1. Interacts with BUD5, CEX1, RRP12, SRM1, and DIS3/RRP44.

It localises to the nucleus. Functionally, GTP-binding protein involved in nucleocytoplasmic transport. Required for the import of protein into the nucleus and also for RNA export. Essential for cell viability. By analogy with Ras, Ran may be activated when GTP is exchanged for bound GDP by RCC1 and inactivated when GTP is hydrolyzed by Ran upon activation by RanGAP1. This Saccharomyces cerevisiae (strain ATCC 204508 / S288c) (Baker's yeast) protein is GTP-binding nuclear protein GSP1/CNR1 (GSP1).